The following is a 147-amino-acid chain: Ribonuclease 4 (147 aa).

The N-terminal stretch at 1–28 (MALQRTQAFLLLLLLTLLGLGLVQPSYG) is a signal peptide. Gln29 is modified (pyrrolidone carboxylic acid). DUMP is bound by residues Arg35, His40, Lys68, Asn71, and Thr72. His40 serves as the catalytic Proton acceptor. 4 disulfide bridges follow: Cys53-Cys109, Cys67-Cys120, Cys85-Cys135, and Cys92-Cys99. His144 (proton donor) is an active-site residue. Phe145 provides a ligand contact to dUMP.

Belongs to the pancreatic ribonuclease family.

It is found in the secreted. Cleaves preferentially after uridine bases. Has antimicrobial activity against uropathogenic E.coli (UPEC). Probably contributes to urinary tract sterility. This Bos taurus (Bovine) protein is Ribonuclease 4 (RNASE4).